The primary structure comprises 642 residues: Threonine--tRNA ligase (642 aa).

The region spanning 1–61 (MPVITLPDGS…ENDAQLSIIT (61 aa)) is the TGS domain. The catalytic stretch occupies residues 243-534 (DHRKIGKQLD…LTEEFAGFFP (292 aa)). An N6-acetyllysine modification is found at K286. Positions 334, 385, and 511 each coordinate Zn(2+).

This sequence belongs to the class-II aminoacyl-tRNA synthetase family. Homodimer. Requires Zn(2+) as cofactor.

The protein resides in the cytoplasm. The catalysed reaction is tRNA(Thr) + L-threonine + ATP = L-threonyl-tRNA(Thr) + AMP + diphosphate + H(+). Functionally, catalyzes the attachment of threonine to tRNA(Thr) in a two-step reaction: L-threonine is first activated by ATP to form Thr-AMP and then transferred to the acceptor end of tRNA(Thr). Also edits incorrectly charged L-seryl-tRNA(Thr). The chain is Threonine--tRNA ligase from Escherichia coli O9:H4 (strain HS).